A 410-amino-acid polypeptide reads, in one-letter code: MNPQLNNLTLPIYMDYQATTPIDPRVMEAMLPYFTTKFGNPHSRSHSFGWEAENAVEEARSMVAKLIGADTKEIIFTSGATESNNLAIKGIAKFYSNKKNHIITVVSEHKCVLDACRHLEQEGIKITYLPIKPNGIIDLETLKNAITDQTMLVSVMVVNNEIGVVQPLKEIGKICREKGVFFHSDIAQGFGKIPIDVNAFNIDLASISGHKIYGPKGIGALYVRKKPRVRVTPLINGGGQERGMRSGTLPTPLIVGLGMAAEIAYSEMEKDTKHVNYLFDRFLNNIHKRISEVYLNGDKNQRYKGNLNLSFAGVEGESMILAIKDLAVSSGSACTSASLEPSYVLRSMGIGEELAHTAIRFGIGRFTTEQEVDYAVNLICSKIDKLRALSPLWEMMQEGIDLKKIKWAVH.

Pyridoxal 5'-phosphate is bound by residues 80–81, Asn-160, Gln-188, and 208–210; these read AT and SGH. Lys-211 is modified (N6-(pyridoxal phosphate)lysine). A pyridoxal 5'-phosphate-binding site is contributed by Thr-248. The Cysteine persulfide intermediate role is filled by Cys-334. Position 334 (Cys-334) interacts with [2Fe-2S] cluster.

The protein belongs to the class-V pyridoxal-phosphate-dependent aminotransferase family. NifS/IscS subfamily. Homodimer. Forms a heterotetramer with IscU, interacts with other sulfur acceptors. Pyridoxal 5'-phosphate is required as a cofactor.

The protein resides in the cytoplasm. The enzyme catalyses (sulfur carrier)-H + L-cysteine = (sulfur carrier)-SH + L-alanine. It participates in cofactor biosynthesis; iron-sulfur cluster biosynthesis. Functionally, master enzyme that delivers sulfur to a number of partners involved in Fe-S cluster assembly, tRNA modification or cofactor biosynthesis. Catalyzes the removal of elemental sulfur atoms from cysteine to produce alanine. Functions as a sulfur delivery protein for Fe-S cluster synthesis onto IscU, an Fe-S scaffold assembly protein, as well as other S acceptor proteins. This chain is Cysteine desulfurase IscS, found in Rickettsia peacockii (strain Rustic).